A 384-amino-acid chain; its full sequence is 4-hydroxy-3-methylbut-2-en-1-yl diphosphate synthase (flavodoxin) (384 aa).

Positions 280, 283, 315, and 322 each coordinate [4Fe-4S] cluster.

Belongs to the IspG family. [4Fe-4S] cluster is required as a cofactor.

The catalysed reaction is (2E)-4-hydroxy-3-methylbut-2-enyl diphosphate + oxidized [flavodoxin] + H2O + 2 H(+) = 2-C-methyl-D-erythritol 2,4-cyclic diphosphate + reduced [flavodoxin]. The protein operates within isoprenoid biosynthesis; isopentenyl diphosphate biosynthesis via DXP pathway; isopentenyl diphosphate from 1-deoxy-D-xylulose 5-phosphate: step 5/6. In terms of biological role, converts 2C-methyl-D-erythritol 2,4-cyclodiphosphate (ME-2,4cPP) into 1-hydroxy-2-methyl-2-(E)-butenyl 4-diphosphate. The sequence is that of 4-hydroxy-3-methylbut-2-en-1-yl diphosphate synthase (flavodoxin) from Frankia casuarinae (strain DSM 45818 / CECT 9043 / HFP020203 / CcI3).